A 296-amino-acid polypeptide reads, in one-letter code: Glycine--tRNA ligase alpha subunit (296 aa).

This sequence belongs to the class-II aminoacyl-tRNA synthetase family. Tetramer of two alpha and two beta subunits.

The protein localises to the cytoplasm. It catalyses the reaction tRNA(Gly) + glycine + ATP = glycyl-tRNA(Gly) + AMP + diphosphate. This chain is Glycine--tRNA ligase alpha subunit, found in Listeria innocua serovar 6a (strain ATCC BAA-680 / CLIP 11262).